Here is a 376-residue protein sequence, read N- to C-terminus: Calcium uniporter protein, mitochondrial (376 aa).

A mitochondrion-targeting transit peptide spans 1 to 34 (MAAKVCRSVLLLSRSSGAVASSAYPAFGVSSQRH). The Mitochondrial matrix segment spans residues 35–257 (QGTKTEALSM…LSKKAERRTT (223 aa)). The N-terminal MCU domain stretch occupies residues 99-189 (VSVVYQNGLP…TSYLVQPPRR (91 aa)). A coiled-coil region spans residues 213-254 (TLRIEEHQLNKERELIGRLEDLNSQLQPLEKVKEELSKKAER). A helical membrane pass occupies residues 258–280 (WVLWGGMAYMATQFGILARLTWW). Residues 281–289 (EYSWDIMEP) lie on the Mitochondrial intermembrane side of the membrane. The short motif at 284 to 292 (WDIMEPVTY) is the Selectivity filter element. Glutamate 288 provides a ligand contact to Ca(2+). A helical membrane pass occupies residues 290 to 309 (VTYFITYGTAMAMYAYFVLT). Positions 309–314 (TRQEYL) are juxtamembrane helix. The Mitochondrial matrix segment spans residues 310 to 376 (RQEYLYPDAR…PIQQIDTSKD (67 aa)). Positions 336 to 363 (FDIEKYNKLKDAIAEAELDLKRLRDPLQ) form a coiled coil.

The protein belongs to the MCU (TC 1.A.77) family. In terms of assembly, homotetramer. Component of the uniplex complex.

It is found in the mitochondrion inner membrane. The enzyme catalyses Ca(2+)(in) = Ca(2+)(out). With respect to regulation, MCU channel activity is regulated by the heterodimer composed of micu1 and micu2, which act as calcium-sensors. At low calcium levels, micu1 occludes the pore of the MCU channel, preventing mitochondrial calcium uptake. At higher calcium levels, calcium-binding to micu1 and micu2 induces a conformational change that weakens mcu-micu1 interactions and moves the micu1-micu2 heterodimer away from the pore, allowing calcium permeation through the channel. MCU channel activity is gated by emre/smdt1 via the juxtamembrane helix loop. Inhibited by ruthenium red or its derivative Ru360. Its function is as follows. Channel-forming and calcium-conducting subunit of the mitochondrial inner membrane calcium uniporter complex (uniplex), which mediates calcium uptake into the mitochondrial matrix. Mcu channel activity is regulated by the calcium-sensor subunits of the uniplex micu1 and micu2. Mitochondrial calcium homeostasis plays key roles in cellular physiology and regulates ATP production, cytoplasmic calcium signals and activation of cell death pathways. Involved in buffering the amplitude of systolic calcium rises in cardiomyocytes. While dispensable for baseline homeostatic cardiac function, acts as a key regulator of short-term mitochondrial calcium loading underlying a 'fight-or-flight' response during acute stress: acts by mediating a rapid increase of mitochondrial calcium in pacemaker cells. Mitochondrial calcium uptake in skeletal muscle cells is involved in muscle size in adults. In Danio rerio (Zebrafish), this protein is Calcium uniporter protein, mitochondrial.